The primary structure comprises 656 residues: Translation factor GUF1 homolog, mitochondrial (656 aa).

The N-terminal 29 residues, Met-1–Phe-29, are a transit peptide targeting the mitochondrion. Residues Glu-54 to Val-238 form the tr-type G domain. Residues Ala-63–Ser-70, Asp-131–His-135, and Thr-185–Asp-188 each bind GTP.

It belongs to the TRAFAC class translation factor GTPase superfamily. Classic translation factor GTPase family. LepA subfamily.

It localises to the mitochondrion inner membrane. It catalyses the reaction GTP + H2O = GDP + phosphate + H(+). Promotes mitochondrial protein synthesis. May act as a fidelity factor of the translation reaction, by catalyzing a one-codon backward translocation of tRNAs on improperly translocated ribosomes. Binds to mitochondrial ribosomes in a GTP-dependent manner. In Phytophthora infestans (strain T30-4) (Potato late blight agent), this protein is Translation factor GUF1 homolog, mitochondrial.